Here is an 80-residue protein sequence, read N- to C-terminus: MSCCGGNCGCGSGCKCGNGCGGCKMYPDLGFSGESTTTETFVFGVAPAMKNQYEASGEGVAENDRCKCGSDCKCDPCTCK.

It belongs to the metallothionein superfamily. Type 15 family.

Metallothioneins have a high content of cysteine residues that bind various heavy metals. The chain is Metallothionein-like protein BIF98 from Brassica rapa subsp. pekinensis (Chinese cabbage).